We begin with the raw amino-acid sequence, 162 residues long: Autophagy-related protein 8 (162 aa).

Residues 1 to 27 (MRSKFKDEHPFEKRKAEAERIRQKYSD) show a composition bias toward basic and acidic residues. The tract at residues 1–42 (MRSKFKDEHPFEKRKAEAERIRQKYSDRIPPSPHSPASRLIG) is disordered. G157 carries Phosphatidylethanolamine amidated glycine lipidation. Positions 158 to 162 (GFETA) are cleaved as a propeptide — removed in mature form.

Belongs to the ATG8 family.

Its subcellular location is the cytoplasmic vesicle. It is found in the autophagosome membrane. It localises to the vacuole membrane. In terms of biological role, ubiquitin-like modifier involved in autophagosome formation. With ATG4, mediates the delivery of the autophagosomes to the vacuole via the microtubule cytoskeleton. Required for selective autophagic degradation of the nucleus (nucleophagy) as well as for mitophagy which contributes to regulate mitochondrial quantity and quality by eliminating the mitochondria to a basal level to fulfill cellular energy requirements and preventing excess ROS production. Also participates in membrane fusion events that take place in the early secretory pathway. Also involved in endoplasmic reticulum-specific autophagic process and is essential for the survival of cells subjected to severe ER stress. The ATG8-PE conjugate mediates tethering between adjacent membranes and stimulates membrane hemifusion, leading to expansion of the autophagosomal membrane during autophagy. This Colletotrichum higginsianum (strain IMI 349063) (Crucifer anthracnose fungus) protein is Autophagy-related protein 8.